A 108-amino-acid polypeptide reads, in one-letter code: Putative pterin-4-alpha-carbinolamine dehydratase (108 aa).

The protein belongs to the pterin-4-alpha-carbinolamine dehydratase family.

The enzyme catalyses (4aS,6R)-4a-hydroxy-L-erythro-5,6,7,8-tetrahydrobiopterin = (6R)-L-erythro-6,7-dihydrobiopterin + H2O. The sequence is that of Putative pterin-4-alpha-carbinolamine dehydratase from Chromobacterium violaceum (strain ATCC 12472 / DSM 30191 / JCM 1249 / CCUG 213 / NBRC 12614 / NCIMB 9131 / NCTC 9757 / MK).